A 95-amino-acid polypeptide reads, in one-letter code: Putative membrane protein insertion efficiency factor (95 aa).

Residues 72-95 (FDPVPDAPTSPSPSSSCSCKGPHP) form a disordered region. The span at 83 to 95 (SPSSSCSCKGPHP) shows a compositional bias: low complexity.

The protein belongs to the UPF0161 family.

It localises to the cell inner membrane. Functionally, could be involved in insertion of integral membrane proteins into the membrane. This chain is Putative membrane protein insertion efficiency factor, found in Xanthomonas axonopodis pv. citri (strain 306).